A 436-amino-acid polypeptide reads, in one-letter code: Serine hydroxymethyltransferase (436 aa).

(6S)-5,6,7,8-tetrahydrofolate-binding positions include Leu120 and 124–126; that span reads GHL. Residue Lys229 is modified to N6-(pyridoxal phosphate)lysine.

Belongs to the SHMT family. As to quaternary structure, homodimer. Pyridoxal 5'-phosphate serves as cofactor.

The protein localises to the cytoplasm. It catalyses the reaction (6R)-5,10-methylene-5,6,7,8-tetrahydrofolate + glycine + H2O = (6S)-5,6,7,8-tetrahydrofolate + L-serine. Its pathway is one-carbon metabolism; tetrahydrofolate interconversion. It participates in amino-acid biosynthesis; glycine biosynthesis; glycine from L-serine: step 1/1. Catalyzes the reversible interconversion of serine and glycine with tetrahydrofolate (THF) serving as the one-carbon carrier. This reaction serves as the major source of one-carbon groups required for the biosynthesis of purines, thymidylate, methionine, and other important biomolecules. Also exhibits THF-independent aldolase activity toward beta-hydroxyamino acids, producing glycine and aldehydes, via a retro-aldol mechanism. This is Serine hydroxymethyltransferase from Roseiflexus castenholzii (strain DSM 13941 / HLO8).